The sequence spans 47 residues: Delta-ctenitoxin-Pr2d (47 aa).

Cystine bridges form between cysteine 3–cysteine 17, cysteine 10–cysteine 23, cysteine 14–cysteine 46, cysteine 16–cysteine 31, and cysteine 25–cysteine 29.

As to expression, expressed by the venom gland.

The protein localises to the secreted. Its function is as follows. Blocks voltage-gated sodium channels (Nav). Causes rapid general spastic paralysis and death when injected in mice at dose levels of less than 2 ug per mouse. This chain is Delta-ctenitoxin-Pr2d, found in Phoneutria reidyi (Brazilian Amazonian armed spider).